The chain runs to 359 residues: uncharacterized protein (359 aa).

Residues Met1–Thr15 form the signal peptide. Residues Ile212–Gln359 enclose the N-acetyltransferase domain.

This is an uncharacterized protein from Mycobacterium leprae (strain TN).